Reading from the N-terminus, the 327-residue chain is DNA primase large subunit PriL (327 aa).

[4Fe-4S] cluster is bound by residues Cys218, Cys290, Cys299, and Cys307.

It belongs to the eukaryotic-type primase large subunit family. As to quaternary structure, heterodimer of a small subunit (PriS) and a large subunit (PriL). Requires [4Fe-4S] cluster as cofactor.

Functionally, regulatory subunit of DNA primase, an RNA polymerase that catalyzes the synthesis of short RNA molecules used as primers for DNA polymerase during DNA replication. Stabilizes and modulates the activity of the small subunit, increasing the rate of DNA synthesis, and conferring RNA synthesis capability. The DNA polymerase activity may enable DNA primase to also catalyze primer extension after primer synthesis. May also play a role in DNA repair. This chain is DNA primase large subunit PriL, found in Thermoplasma volcanium (strain ATCC 51530 / DSM 4299 / JCM 9571 / NBRC 15438 / GSS1).